Consider the following 493-residue polypeptide: High affinity nitrate transporter 2.7 (493 aa).

Residues 1-19 show a composition bias toward polar residues; it reads MEPSQRNTKPPSFSDSTIP. The segment at 1–20 is disordered; that stretch reads MEPSQRNTKPPSFSDSTIPV. The next 12 helical transmembrane spans lie at 46–66, 70–90, 113–133, 136–156, 174–194, 202–222, 257–277, 299–319, 341–361, 368–388, 400–420, and 431–451; these read WLSL…VPVI, LNLS…GSIF, FLTA…SFIL, FFVG…SSMF, VGAG…AEFL, VSFV…LLYG, FVEI…ALLY, FGVN…SNIA, LWGL…LGRV, ILVM…VFGV, VAGI…FLLF, and ISLM…IYFP.

This sequence belongs to the major facilitator superfamily. Nitrate/nitrite porter (TC 2.A.1.8) family. As to expression, expressed in seeds, leaves and shoots. Lower expression in roots.

It localises to the vacuole membrane. Functionally, involved in high-affinity nitrate transport. Controls nitrate content in seeds. This chain is High affinity nitrate transporter 2.7 (NRT2.7), found in Arabidopsis thaliana (Mouse-ear cress).